The sequence spans 260 residues: Indole-3-glycerol phosphate synthase (260 aa).

It belongs to the TrpC family.

It catalyses the reaction 1-(2-carboxyphenylamino)-1-deoxy-D-ribulose 5-phosphate + H(+) = (1S,2R)-1-C-(indol-3-yl)glycerol 3-phosphate + CO2 + H2O. The protein operates within amino-acid biosynthesis; L-tryptophan biosynthesis; L-tryptophan from chorismate: step 4/5. The polypeptide is Indole-3-glycerol phosphate synthase (Nocardioides sp. (strain ATCC BAA-499 / JS614)).